Reading from the N-terminus, the 534-residue chain is Cytokinin dehydrogenase 5 (534 aa).

The signal sequence occupies residues 1-20 (MAWCLVFMVFLIYCLISTVG). The 185-residue stretch at 59–243 (TSAEPLAVFH…TRARIALEPA (185 aa)) folds into the FAD-binding PCMH-type domain. Ala93, Gly95, and Gly97 together coordinate FAD. A Pros-8alpha-FAD histidine modification is found at His98. FAD is bound by residues Ser99 and Gln103. N-linked (GlcNAc...) asparagine glycosylation occurs at Asn152. Asp167, Ser172, Ser178, Ile182, and Ile233 together coordinate FAD. Asn256 is a glycosylation site (N-linked (GlcNAc...) asparagine). FAD contacts are provided by Tyr484 and Gln522.

Belongs to the oxygen-dependent FAD-linked oxidoreductase family. In terms of assembly, monomer. FAD serves as cofactor. In terms of tissue distribution, expressed in inflorescence meristems.

It is found in the secreted. The protein resides in the extracellular space. It carries out the reaction N(6)-dimethylallyladenine + A + H2O = 3-methyl-2-butenal + adenine + AH2. Functionally, catalyzes the oxidation of cytokinins, a family of N(6)-substituted adenine derivatives that are plant hormones, where the substituent is an isopentenyl group. The protein is Cytokinin dehydrogenase 5 (CKX5) of Oryza sativa subsp. japonica (Rice).